The following is a 729-amino-acid chain: Glycerophosphodiester phosphodiesterase GDPDL5 (729 aa).

Positions 1–22 (MACPRVIFLILITFFILQTAFS) are cleaved as a signal peptide. GP-PDE domains are found at residues 33 to 320 (PAVI…YRAI) and 337 to 645 (ITII…ARYR). Residues Asn-88, Asn-162, Asn-218, Asn-227, Asn-285, Asn-302, Asn-390, Asn-401, and Asn-507 are each glycosylated (N-linked (GlcNAc...) asparagine). Residues 709–729 (AIEVPFAFIAMAILVCFFISV) form a helical membrane-spanning segment.

The protein belongs to the glycerophosphoryl diester phosphodiesterase family. In terms of tissue distribution, expressed in stems, flowers and siliques.

The protein localises to the membrane. It carries out the reaction a sn-glycero-3-phosphodiester + H2O = an alcohol + sn-glycerol 3-phosphate + H(+). This is Glycerophosphodiester phosphodiesterase GDPDL5 from Arabidopsis thaliana (Mouse-ear cress).